The chain runs to 630 residues: Probable potassium transport system protein Kup (630 aa).

The next 12 helical transmembrane spans lie at 17–37 (LAIA…LYSL), 51–71 (PSAI…VVGI), 105–125 (ITGL…GDAV), 144–164 (PQLS…LFWI), 175–195 (LFGP…IYHI), 218–238 (VLLA…AEAL), 255–275 (YVLV…LLLL), 283–303 (PFFL…STVA), 344–364 (IYVP…VIGF), 374–394 (YGIA…VVMV), 402–422 (LLVA…FGAN), and 428–448 (QGGW…MTWY).

It belongs to the HAK/KUP transporter (TC 2.A.72) family.

It is found in the cell inner membrane. The catalysed reaction is K(+)(in) + H(+)(in) = K(+)(out) + H(+)(out). Its function is as follows. Transport of potassium into the cell. Likely operates as a K(+):H(+) symporter. The sequence is that of Probable potassium transport system protein Kup from Burkholderia pseudomallei (strain K96243).